A 346-amino-acid polypeptide reads, in one-letter code: Hydroxymethylglutaryl-CoA synthase (346 aa).

Asp-28 serves as a coordination point for (3S)-3-hydroxy-3-methylglutaryl-CoA. Glu-80 functions as the Proton donor/acceptor in the catalytic mechanism. Cys-112 and Thr-153 together coordinate (3S)-3-hydroxy-3-methylglutaryl-CoA. Cys-112 (acyl-thioester intermediate) is an active-site residue. Arg-199 contributes to the CoA binding site. Residues Thr-201 and His-234 each coordinate (3S)-3-hydroxy-3-methylglutaryl-CoA. The active-site Proton donor/acceptor is His-234. Lys-239 is a binding site for CoA. Positions 243, 266, and 296 each coordinate (3S)-3-hydroxy-3-methylglutaryl-CoA.

This sequence belongs to the thiolase-like superfamily. Archaeal HMG-CoA synthase family. Interacts with acetoacetyl-CoA thiolase that catalyzes the precedent step in the pathway and with a DUF35 protein. The acetoacetyl-CoA thiolase/HMG-CoA synthase complex channels the intermediate via a fused CoA-binding site, which allows for efficient coupling of the endergonic thiolase reaction with the exergonic HMGCS reaction.

The catalysed reaction is acetoacetyl-CoA + acetyl-CoA + H2O = (3S)-3-hydroxy-3-methylglutaryl-CoA + CoA + H(+). It participates in metabolic intermediate biosynthesis; (R)-mevalonate biosynthesis; (R)-mevalonate from acetyl-CoA: step 2/3. Catalyzes the condensation of acetyl-CoA with acetoacetyl-CoA to form 3-hydroxy-3-methylglutaryl-CoA (HMG-CoA). Functions in the mevalonate (MVA) pathway leading to isopentenyl diphosphate (IPP), a key precursor for the biosynthesis of isoprenoid compounds that are building blocks of archaeal membrane lipids. The sequence is that of Hydroxymethylglutaryl-CoA synthase from Methanosphaera stadtmanae (strain ATCC 43021 / DSM 3091 / JCM 11832 / MCB-3).